A 243-amino-acid polypeptide reads, in one-letter code: Tyrosine recombinase XerD-like (243 aa).

In terms of domain architecture, Core-binding (CB) spans 1-72 (MKQAIESFIQ…AVNQFLYFLY (72 aa)). Positions 91–243 (SVKKKLERED…KTSMSLEKFR (153 aa)) constitute a Tyr recombinase domain. Catalysis depends on residues K149 and R210.

This sequence belongs to the 'phage' integrase family. XerD-like subfamily.

The protein resides in the cytoplasm. Functionally, putative tyrosine recombinase. Not involved in the cutting and rejoining of the recombining DNA molecules on dif(SL) site. The sequence is that of Tyrosine recombinase XerD-like from Streptococcus suis (strain 98HAH33).